Here is a 147-residue protein sequence, read N- to C-terminus: Hemoglobin subunit epsilon (147 aa).

Positions 3–147 (HFTAEEKAII…VATALAHKYH (145 aa)) constitute a Globin domain. A phosphoserine mark is found at Ser-14 and Ser-51. Heme b contacts are provided by His-64 and His-93.

It belongs to the globin family. Heterotetramer of two alpha chains and two epsilon chains in early embryonic hemoglobin Gower-2; two zeta chains and two epsilon chains in early embryonic hemoglobin Gower-1. In terms of tissue distribution, red blood cells.

Its function is as follows. The epsilon chain is a beta-type chain of early mammalian embryonic hemoglobin. In Otolemur crassicaudatus (Brown greater galago), this protein is Hemoglobin subunit epsilon (HBE1).